The following is a 171-amino-acid chain: Endoribonuclease YbeY (171 aa).

Positions 126, 130, and 136 each coordinate Zn(2+).

This sequence belongs to the endoribonuclease YbeY family. Zn(2+) serves as cofactor.

The protein resides in the cytoplasm. Its function is as follows. Single strand-specific metallo-endoribonuclease involved in late-stage 70S ribosome quality control and in maturation of the 3' terminus of the 16S rRNA. This is Endoribonuclease YbeY from Rhizobium johnstonii (strain DSM 114642 / LMG 32736 / 3841) (Rhizobium leguminosarum bv. viciae).